Consider the following 279-residue polypeptide: Acetyl-coenzyme A carboxylase carboxyl transferase subunit beta (279 aa).

The region spanning 23–279 (LWWKCEECGA…IVRLAGMLKV (257 aa)) is the CoA carboxyltransferase N-terminal domain. 4 residues coordinate Zn(2+): C27, C30, C46, and C49. The C4-type zinc-finger motif lies at 27-49 (CEECGAMIHKKQLEDHVYTCSDC).

This sequence belongs to the AccD/PCCB family. In terms of assembly, acetyl-CoA carboxylase is a heterohexamer composed of biotin carboxyl carrier protein (AccB), biotin carboxylase (AccC) and two subunits each of ACCase subunit alpha (AccA) and ACCase subunit beta (AccD). Zn(2+) serves as cofactor.

The protein localises to the cytoplasm. The catalysed reaction is N(6)-carboxybiotinyl-L-lysyl-[protein] + acetyl-CoA = N(6)-biotinyl-L-lysyl-[protein] + malonyl-CoA. It participates in lipid metabolism; malonyl-CoA biosynthesis; malonyl-CoA from acetyl-CoA: step 1/1. In terms of biological role, component of the acetyl coenzyme A carboxylase (ACC) complex. Biotin carboxylase (BC) catalyzes the carboxylation of biotin on its carrier protein (BCCP) and then the CO(2) group is transferred by the transcarboxylase to acetyl-CoA to form malonyl-CoA. The chain is Acetyl-coenzyme A carboxylase carboxyl transferase subunit beta from Chlorobium limicola (strain DSM 245 / NBRC 103803 / 6330).